We begin with the raw amino-acid sequence, 136 residues long: Protein BUNDLE SHEATH DEFECTIVE 2, chloroplastic (136 aa).

Residues 1–56 (MANSLCFFSSPPTFCFQSPSKNPKPSHFFSTNDNTSSLVQKRELLQTSRSQSFEVK) constitute a chloroplast transit peptide. Residues 62–133 (PQGTKPNSLV…AGFIGGFLST (72 aa)) form a CR-type zinc finger. Zn(2+) is bound by residues Cys72, Cys75, Glu78, Cys80, Cys83, Cys86, Cys107, Cys110, Glu115, Cys118, and Cys121.

The protein belongs to the BSD2 chaperone family. As to quaternary structure, interacts with the RuBisCo large subunit (RbcL) assembled as an intermediate complex made of eight RbcL and eight BSD2 subunits.

Its subcellular location is the plastid. The protein resides in the chloroplast stroma. Functionally, chloroplast chaperone required for RuBisCo biogenesis and translational regulation of the RuBisCo large subunit (RbcL). Stabilizes an end-state assembly intermediate of eight RbcL subunits until the small subunits (RBCSs) become available to produce a complete stable RuBisCo complex containing eight small and eight large subunits. This is Protein BUNDLE SHEATH DEFECTIVE 2, chloroplastic from Arabidopsis thaliana (Mouse-ear cress).